Here is a 180-residue protein sequence, read N- to C-terminus: Large ribosomal subunit protein uL5 (180 aa).

Belongs to the universal ribosomal protein uL5 family. In terms of assembly, part of the 50S ribosomal subunit; part of the 5S rRNA/L5/L18/L25 subcomplex. Contacts the 5S rRNA and the P site tRNA. Forms a bridge to the 30S subunit in the 70S ribosome.

Functionally, this is one of the proteins that bind and probably mediate the attachment of the 5S RNA into the large ribosomal subunit, where it forms part of the central protuberance. In the 70S ribosome it contacts protein S13 of the 30S subunit (bridge B1b), connecting the 2 subunits; this bridge is implicated in subunit movement. Contacts the P site tRNA; the 5S rRNA and some of its associated proteins might help stabilize positioning of ribosome-bound tRNAs. The chain is Large ribosomal subunit protein uL5 from Chlamydia caviae (strain ATCC VR-813 / DSM 19441 / 03DC25 / GPIC) (Chlamydophila caviae).